We begin with the raw amino-acid sequence, 364 residues long: Ribosomal RNA large subunit methyltransferase F (364 aa).

A compositionally biased stretch (low complexity) spans 1–17 (MPKPAIKTAAKPATSSA). The tract at residues 1-53 (MPKPAIKTAAKPATSSAGKRGKPNTPKSVAKPKTAKPKTASKPKVKPGEKKRL) is disordered. Over residues 33-53 (KTAKPKTASKPKVKPGEKKRL) the composition is skewed to basic residues.

It belongs to the methyltransferase superfamily. METTL16/RlmF family.

The protein localises to the cytoplasm. The catalysed reaction is adenosine(1618) in 23S rRNA + S-adenosyl-L-methionine = N(6)-methyladenosine(1618) in 23S rRNA + S-adenosyl-L-homocysteine + H(+). Specifically methylates the adenine in position 1618 of 23S rRNA. In Shewanella sp. (strain MR-7), this protein is Ribosomal RNA large subunit methyltransferase F.